Consider the following 92-residue polypeptide: ATP synthase subunit c (92 aa).

Helical transmembrane passes span 20–40 and 71–91; these read GAGL…GTGL and MAIS…LVFV.

Belongs to the ATPase C chain family. In terms of assembly, F-type ATPases have 2 components, F(1) - the catalytic core - and F(0) - the membrane proton channel. F(1) has five subunits: alpha(3), beta(3), gamma(1), delta(1), epsilon(1). F(0) has three main subunits: a(1), b(2) and c(10-14). The alpha and beta chains form an alternating ring which encloses part of the gamma chain. F(1) is attached to F(0) by a central stalk formed by the gamma and epsilon chains, while a peripheral stalk is formed by the delta and b chains.

The protein localises to the cell membrane. Its function is as follows. F(1)F(0) ATP synthase produces ATP from ADP in the presence of a proton or sodium gradient. F-type ATPases consist of two structural domains, F(1) containing the extramembraneous catalytic core and F(0) containing the membrane proton channel, linked together by a central stalk and a peripheral stalk. During catalysis, ATP synthesis in the catalytic domain of F(1) is coupled via a rotary mechanism of the central stalk subunits to proton translocation. In terms of biological role, key component of the F(0) channel; it plays a direct role in translocation across the membrane. A homomeric c-ring of between 10-14 subunits forms the central stalk rotor element with the F(1) delta and epsilon subunits. The chain is ATP synthase subunit c from Mycoplasmopsis pulmonis (strain UAB CTIP) (Mycoplasma pulmonis).